Here is a 255-residue protein sequence, read N- to C-terminus: Hydroxyacylglutathione hydrolase (255 aa).

Zn(2+) is bound by residues His-55, His-57, Asp-59, His-60, His-113, Asp-132, and His-170.

This sequence belongs to the metallo-beta-lactamase superfamily. Glyoxalase II family. In terms of assembly, monomer. Requires Zn(2+) as cofactor.

It carries out the reaction an S-(2-hydroxyacyl)glutathione + H2O = a 2-hydroxy carboxylate + glutathione + H(+). It participates in secondary metabolite metabolism; methylglyoxal degradation; (R)-lactate from methylglyoxal: step 2/2. Its function is as follows. Thiolesterase that catalyzes the hydrolysis of S-D-lactoyl-glutathione to form glutathione and D-lactic acid. The protein is Hydroxyacylglutathione hydrolase of Methylobacterium nodulans (strain LMG 21967 / CNCM I-2342 / ORS 2060).